The following is a 62-amino-acid chain: Large ribosomal subunit protein bL28 (62 aa).

The segment at 1 to 24 (MGKQCFVTGRKASTGNNRSHALNS) is disordered. The span at 11 to 24 (KASTGNNRSHALNS) shows a compositional bias: polar residues.

It belongs to the bacterial ribosomal protein bL28 family.

In Staphylococcus saprophyticus subsp. saprophyticus (strain ATCC 15305 / DSM 20229 / NCIMB 8711 / NCTC 7292 / S-41), this protein is Large ribosomal subunit protein bL28.